Reading from the N-terminus, the 398-residue chain is Mannitol-1-phosphate 5-dehydrogenase (398 aa).

10 to 21 contributes to the NAD(+) binding site; sequence AVHFGAGNIGRG. Lys221 is an active-site residue.

The protein belongs to the mannitol dehydrogenase family. In terms of assembly, monomer.

The catalysed reaction is D-mannitol 1-phosphate + NAD(+) = beta-D-fructose 6-phosphate + NADH + H(+). Its function is as follows. Catalyzes the NAD(H)-dependent interconversion of D-fructose 6-phosphate and D-mannitol 1-phosphate in the mannitol metabolic pathway. This Chaetomium globosum (strain ATCC 6205 / CBS 148.51 / DSM 1962 / NBRC 6347 / NRRL 1970) (Soil fungus) protein is Mannitol-1-phosphate 5-dehydrogenase.